We begin with the raw amino-acid sequence, 707 residues long: DNA topoisomerase 1 (707 aa).

Residues 1 to 140 form the Toprim domain; that stretch reads MYAILAEKPS…IKRLWTSSMT (140 aa). The 440-residue stretch at 157–596 folds into the Topo IA-type catalytic domain; sequence TLPLYYQAKA…HSKKLSSVLF (440 aa). The tract at residues 199 to 204 is interaction with DNA; it reads SLGRVQ. Tyr323 acts as the O-(5'-phospho-DNA)-tyrosine intermediate in catalysis.

This sequence belongs to the type IA topoisomerase family. Monomer.

The catalysed reaction is ATP-independent breakage of single-stranded DNA, followed by passage and rejoining.. In terms of biological role, releases the supercoiling and torsional tension of DNA, which is introduced during the DNA replication and transcription, by transiently cleaving and rejoining one strand of the DNA duplex. Introduces a single-strand break via transesterification at a target site in duplex DNA. The scissile phosphodiester is attacked by the catalytic tyrosine of the enzyme, resulting in the formation of a DNA-(5'-phosphotyrosyl)-enzyme intermediate and the expulsion of a 3'-OH DNA strand. The free DNA strand then undergoes passage around the unbroken strand, thus removing DNA supercoils. Finally, in the religation step, the DNA 3'-OH attacks the covalent intermediate to expel the active-site tyrosine and restore the DNA phosphodiester backbone. This chain is DNA topoisomerase 1 (topA), found in Alkalihalophilus pseudofirmus (strain ATCC BAA-2126 / JCM 17055 / OF4) (Bacillus pseudofirmus).